Here is a 63-residue protein sequence, read N- to C-terminus: Large ribosomal subunit protein uL29 (63 aa).

The protein belongs to the universal ribosomal protein uL29 family.

The chain is Large ribosomal subunit protein uL29 from Proteus mirabilis (strain HI4320).